The primary structure comprises 166 residues: Immunity protein RhsIB (166 aa).

In terms of biological role, immunity component of a toxin-immunity protein module, which functions as a cellular contact-dependent growth inhibition (CDI) system. Specifically inhibits its cognate toxin RhsB. Cell contact is necessary for growth inhibition. The sequence is that of Immunity protein RhsIB (rhsIB) from Dickeya dadantii (strain 3937) (Erwinia chrysanthemi (strain 3937)).